The chain runs to 353 residues: Phosphate acyltransferase (353 aa).

Belongs to the PlsX family. In terms of assembly, homodimer. Probably interacts with PlsY.

The protein localises to the cytoplasm. It catalyses the reaction a fatty acyl-[ACP] + phosphate = an acyl phosphate + holo-[ACP]. It functions in the pathway lipid metabolism; phospholipid metabolism. In terms of biological role, catalyzes the reversible formation of acyl-phosphate (acyl-PO(4)) from acyl-[acyl-carrier-protein] (acyl-ACP). This enzyme utilizes acyl-ACP as fatty acyl donor, but not acyl-CoA. In Rhodopseudomonas palustris (strain ATCC BAA-98 / CGA009), this protein is Phosphate acyltransferase.